The sequence spans 261 residues: Carnitinyl-CoA dehydratase (261 aa).

Catalysis depends on glutamate 111, which acts as the Nucleophile. The active-site Proton acceptor is the glutamate 131.

It belongs to the enoyl-CoA hydratase/isomerase family.

It carries out the reaction (R)-carnitinyl-CoA = crotonobetainyl-CoA + H2O. Its pathway is amine and polyamine metabolism; carnitine metabolism. In terms of biological role, catalyzes the reversible dehydration of L-carnitinyl-CoA to crotonobetainyl-CoA. In Citrobacter koseri (strain ATCC BAA-895 / CDC 4225-83 / SGSC4696), this protein is Carnitinyl-CoA dehydratase.